Reading from the N-terminus, the 154-residue chain is Myoglobin (154 aa).

Residues 2 to 148 (GLSDGEWQLV…FRNDIAAKYK (147 aa)) enclose the Globin domain. The residue at position 4 (serine 4) is a Phosphoserine. Histidine 65 lines the nitrite pocket. Histidine 65 contributes to the O2 binding site. Threonine 68 is subject to Phosphothreonine. Histidine 94 is a heme b binding site.

The protein belongs to the globin family. In terms of assembly, monomeric.

It localises to the cytoplasm. The protein resides in the sarcoplasm. It carries out the reaction Fe(III)-heme b-[protein] + nitric oxide + H2O = Fe(II)-heme b-[protein] + nitrite + 2 H(+). The catalysed reaction is H2O2 + AH2 = A + 2 H2O. In terms of biological role, monomeric heme protein which primary function is to store oxygen and facilitate its diffusion within muscle tissues. Reversibly binds oxygen through a pentacoordinated heme iron and enables its timely and efficient release as needed during periods of heightened demand. Depending on the oxidative conditions of tissues and cells, and in addition to its ability to bind oxygen, it also has a nitrite reductase activity whereby it regulates the production of bioactive nitric oxide. Under stress conditions, like hypoxia and anoxia, it also protects cells against reactive oxygen species thanks to its pseudoperoxidase activity. The polypeptide is Myoglobin (MB) (Meles meles (Eurasian badger)).